Here is a 560-residue protein sequence, read N- to C-terminus: Mitogen-activated protein kinase kinase kinase 3 (560 aa).

Residues K70–T91 form a disordered region. Residues W303–V557 enclose the Protein kinase domain. ATP-binding positions include L309–V317 and K331. The active-site Proton acceptor is the D426.

This sequence belongs to the protein kinase superfamily. STE Ser/Thr protein kinase family. MAP kinase kinase kinase subfamily. As to expression, expressed at low levels in roots, stems, siliques, leaves, seedlings and flower buds.

It carries out the reaction L-seryl-[protein] + ATP = O-phospho-L-seryl-[protein] + ADP + H(+). The catalysed reaction is L-threonyl-[protein] + ATP = O-phospho-L-threonyl-[protein] + ADP + H(+). The polypeptide is Mitogen-activated protein kinase kinase kinase 3 (Arabidopsis thaliana (Mouse-ear cress)).